A 537-amino-acid polypeptide reads, in one-letter code: CTP synthase (537 aa).

Residues 1–267 form an amidoligase domain region; it reads MTNTKFVFVT…ISVLEERLFG (267 aa). Ser-15 lines the CTP pocket. Ser-15 serves as a coordination point for UTP. ATP is bound at residue 16–21; it reads SVGKGI. An L-glutamine-binding site is contributed by Tyr-56. Asp-73 lines the ATP pocket. Asp-73 and Glu-141 together coordinate Mg(2+). CTP-binding positions include 148–150, 188–193, and Lys-224; these read DIE and KTKPTQ. UTP-binding positions include 188–193 and Lys-224; that span reads KTKPTQ. The region spanning 297–535 is the Glutamine amidotransferase type-1 domain; sequence YVVLPDAYLS…LSEAVAKASP (239 aa). An L-glutamine-binding site is contributed by Gly-355. Cys-382 serves as the catalytic Nucleophile; for glutamine hydrolysis. Residues 383–386, Glu-406, and Arg-463 contribute to the L-glutamine site; that span reads LGMQ. Catalysis depends on residues His-508 and Glu-510.

It belongs to the CTP synthase family. Homotetramer.

It catalyses the reaction UTP + L-glutamine + ATP + H2O = CTP + L-glutamate + ADP + phosphate + 2 H(+). The catalysed reaction is L-glutamine + H2O = L-glutamate + NH4(+). It carries out the reaction UTP + NH4(+) + ATP = CTP + ADP + phosphate + 2 H(+). Its pathway is pyrimidine metabolism; CTP biosynthesis via de novo pathway; CTP from UDP: step 2/2. With respect to regulation, allosterically activated by GTP, when glutamine is the substrate; GTP has no effect on the reaction when ammonia is the substrate. The allosteric effector GTP functions by stabilizing the protein conformation that binds the tetrahedral intermediate(s) formed during glutamine hydrolysis. Inhibited by the product CTP, via allosteric rather than competitive inhibition. Catalyzes the ATP-dependent amination of UTP to CTP with either L-glutamine or ammonia as the source of nitrogen. Regulates intracellular CTP levels through interactions with the four ribonucleotide triphosphates. This chain is CTP synthase, found in Coprothermobacter proteolyticus (strain ATCC 35245 / DSM 5265 / OCM 4 / BT).